Here is a 327-residue protein sequence, read N- to C-terminus: Annexin A8-like protein 1 (327 aa).

4 Annexin repeats span residues 21-92 (FNPD…ALMY), 93-164 (PPYR…CLLQ), 177-249 (ALAL…TVVK), and 253-324 (NLHS…SLVG). Ca(2+)-binding residues include Met266, Gly268, Gly270, and Asp310.

This sequence belongs to the annexin family.

In Homo sapiens (Human), this protein is Annexin A8-like protein 1.